Reading from the N-terminus, the 317-residue chain is Hydroxyacyl-CoA dehydrogenase ChsB1 (317 aa).

Leu32, Asp51, Asp82, Ile83, Asn108, Ser168, Tyr181, Lys185, and Thr215 together coordinate NAD(+). Residues Ser168, Tyr181, and Lys185 contribute to the active site.

Belongs to the short-chain dehydrogenases/reductases (SDR) family. Homodimer, with 1 active site on each face.

The enzyme catalyses (22S)-hydroxy-3-oxo-chol-4-ene-24-oyl-CoA + NAD(+) = 3,22-dioxochol-4-en-24-oyl-CoA + NADH + H(+). It participates in steroid metabolism; cholesterol degradation. Its function is as follows. A reversible dehydrogenase involved in cholesterol side-chain degradation. Catalyzes the oxidation of hydroxyl-cholesterol-CoA ester metabolic intermediate (22S)-HOCO-CoA (3-oxo-chol-4-ene-(22S)-hydroxy-24-oyl-CoA), the product of ChsH3, has no activity on (22R)-HOCO-CoA (the product of EchA19). Also acts on (3R)-hydroxyoctanoyl-CoA and 17-beta-hydroxyandrost-4-en-3-one, but not on 7-alpha-hydroxyandrost-4-en-3-one, uses NAD(+) but not NADP(+). In Mycobacterium tuberculosis (strain ATCC 25618 / H37Rv), this protein is Hydroxyacyl-CoA dehydrogenase ChsB1.